Consider the following 535-residue polypeptide: T-complex protein 1 subunit zeta (535 aa).

Belongs to the TCP-1 chaperonin family. As to quaternary structure, heterooligomeric complex of about 850 to 900 kDa that forms two stacked rings, 12 to 16 nm in diameter.

It is found in the cytoplasm. Molecular chaperone; assists the folding of proteins upon ATP hydrolysis. Known to play a role, in vitro, in the folding of actin and tubulin. The sequence is that of T-complex protein 1 subunit zeta (cct6) from Schizosaccharomyces pombe (strain 972 / ATCC 24843) (Fission yeast).